A 266-amino-acid chain; its full sequence is Glucosamine-6-phosphate deaminase (266 aa).

The Proton acceptor; for enolization step role is filled by D72. Catalysis depends on D141, which acts as the For ring-opening step. The Proton acceptor; for ring-opening step role is filled by H143. Residue E148 is the For ring-opening step of the active site.

Belongs to the glucosamine/galactosamine-6-phosphate isomerase family. NagB subfamily. In terms of assembly, homohexamer.

The enzyme catalyses alpha-D-glucosamine 6-phosphate + H2O = beta-D-fructose 6-phosphate + NH4(+). The protein operates within amino-sugar metabolism; N-acetylneuraminate degradation; D-fructose 6-phosphate from N-acetylneuraminate: step 5/5. Its activity is regulated as follows. Allosterically activated by N-acetylglucosamine 6-phosphate (GlcNAc6P). Catalyzes the reversible isomerization-deamination of glucosamine 6-phosphate (GlcN6P) to form fructose 6-phosphate (Fru6P) and ammonium ion. This chain is Glucosamine-6-phosphate deaminase, found in Tolumonas auensis (strain DSM 9187 / NBRC 110442 / TA 4).